Consider the following 137-residue polypeptide: ATP synthase epsilon chain, chloroplastic (137 aa).

The protein belongs to the ATPase epsilon chain family. As to quaternary structure, F-type ATPases have 2 components, CF(1) - the catalytic core - and CF(0) - the membrane proton channel. CF(1) has five subunits: alpha(3), beta(3), gamma(1), delta(1), epsilon(1). CF(0) has three main subunits: a, b and c.

It localises to the plastid. It is found in the chloroplast thylakoid membrane. Its function is as follows. Produces ATP from ADP in the presence of a proton gradient across the membrane. This Pinus thunbergii (Japanese black pine) protein is ATP synthase epsilon chain, chloroplastic.